The following is a 60-amino-acid chain: UPF0434 protein ECA2555 (60 aa).

This sequence belongs to the UPF0434 family.

The protein is UPF0434 protein ECA2555 of Pectobacterium atrosepticum (strain SCRI 1043 / ATCC BAA-672) (Erwinia carotovora subsp. atroseptica).